Here is a 161-residue protein sequence, read N- to C-terminus: Nucleotide-binding protein GM21_0633 (161 aa).

This sequence belongs to the YajQ family.

Its function is as follows. Nucleotide-binding protein. In Geobacter sp. (strain M21), this protein is Nucleotide-binding protein GM21_0633.